A 518-amino-acid chain; its full sequence is Glutamate--cysteine ligase (518 aa).

It belongs to the glutamate--cysteine ligase type 1 family. Type 1 subfamily.

The enzyme catalyses L-cysteine + L-glutamate + ATP = gamma-L-glutamyl-L-cysteine + ADP + phosphate + H(+). It participates in sulfur metabolism; glutathione biosynthesis; glutathione from L-cysteine and L-glutamate: step 1/2. The protein is Glutamate--cysteine ligase of Salmonella gallinarum (strain 287/91 / NCTC 13346).